Reading from the N-terminus, the 138-residue chain is MATGRRVSRVAELIKREVSQMLLHSIKDDRVGSGMISVTAVDLSGDLQHAKIFVSIYGTDEARAETMAGLESATGYVRKQLGHRIHLRRTPEVIFCEDRSFEEGNQVLSLLHKLDHERQNKPAASTEKPPVGSLDADL.

The tract at residues 117-138 is disordered; that stretch reads ERQNKPAASTEKPPVGSLDADL.

This sequence belongs to the RbfA family. In terms of assembly, monomer. Binds 30S ribosomal subunits, but not 50S ribosomal subunits or 70S ribosomes.

The protein resides in the cytoplasm. In terms of biological role, one of several proteins that assist in the late maturation steps of the functional core of the 30S ribosomal subunit. Associates with free 30S ribosomal subunits (but not with 30S subunits that are part of 70S ribosomes or polysomes). Required for efficient processing of 16S rRNA. May interact with the 5'-terminal helix region of 16S rRNA. In Acaryochloris marina (strain MBIC 11017), this protein is Ribosome-binding factor A.